We begin with the raw amino-acid sequence, 392 residues long: Formate-dependent phosphoribosylglycinamide formyltransferase (392 aa).

N(1)-(5-phospho-beta-D-ribosyl)glycinamide contacts are provided by residues 15 to 16 (EL) and Glu-75. Residues Arg-107, Lys-148, 153–158 (SSGKGQ), 188–191 (EEFL), and Glu-196 contribute to the ATP site. The region spanning 112–302 (DLASEELALL…EFELHLRAVL (191 aa)) is the ATP-grasp domain. Positions 261 and 273 each coordinate Mg(2+). N(1)-(5-phospho-beta-D-ribosyl)glycinamide is bound by residues Asp-280, Lys-350, and 357–358 (RR).

The protein belongs to the PurK/PurT family. Homodimer.

The catalysed reaction is N(1)-(5-phospho-beta-D-ribosyl)glycinamide + formate + ATP = N(2)-formyl-N(1)-(5-phospho-beta-D-ribosyl)glycinamide + ADP + phosphate + H(+). It functions in the pathway purine metabolism; IMP biosynthesis via de novo pathway; N(2)-formyl-N(1)-(5-phospho-D-ribosyl)glycinamide from N(1)-(5-phospho-D-ribosyl)glycinamide (formate route): step 1/1. In terms of biological role, involved in the de novo purine biosynthesis. Catalyzes the transfer of formate to 5-phospho-ribosyl-glycinamide (GAR), producing 5-phospho-ribosyl-N-formylglycinamide (FGAR). Formate is provided by PurU via hydrolysis of 10-formyl-tetrahydrofolate. The sequence is that of Formate-dependent phosphoribosylglycinamide formyltransferase from Prochlorococcus marinus (strain MIT 9303).